Consider the following 375-residue polypeptide: Succinyl-diaminopimelate desuccinylase (375 aa).

Histidine 66 serves as a coordination point for Zn(2+). Aspartate 68 is a catalytic residue. Aspartate 99 lines the Zn(2+) pocket. Glutamate 133 serves as the catalytic Proton acceptor. Residues glutamate 134, glutamate 162, and histidine 348 each coordinate Zn(2+).

This sequence belongs to the peptidase M20A family. DapE subfamily. In terms of assembly, homodimer. Requires Zn(2+) as cofactor. The cofactor is Co(2+).

The catalysed reaction is N-succinyl-(2S,6S)-2,6-diaminopimelate + H2O = (2S,6S)-2,6-diaminopimelate + succinate. It functions in the pathway amino-acid biosynthesis; L-lysine biosynthesis via DAP pathway; LL-2,6-diaminopimelate from (S)-tetrahydrodipicolinate (succinylase route): step 3/3. In terms of biological role, catalyzes the hydrolysis of N-succinyl-L,L-diaminopimelic acid (SDAP), forming succinate and LL-2,6-diaminopimelate (DAP), an intermediate involved in the bacterial biosynthesis of lysine and meso-diaminopimelic acid, an essential component of bacterial cell walls. The sequence is that of Succinyl-diaminopimelate desuccinylase from Enterobacter sp. (strain 638).